A 189-amino-acid chain; its full sequence is Lipid A acyltransferase PagP (189 aa).

The signal sequence occupies residues M1–A24. Catalysis depends on residues H61, D104, and S105.

It belongs to the lipid A palmitoyltransferase family. Homodimer.

It is found in the cell outer membrane. The catalysed reaction is a lipid A + a 1,2-diacyl-sn-glycero-3-phosphocholine = a hepta-acyl lipid A + a 2-acyl-sn-glycero-3-phosphocholine. It catalyses the reaction a lipid IVA + a 1,2-diacyl-sn-glycero-3-phosphocholine = a lipid IVB + a 2-acyl-sn-glycero-3-phosphocholine. The enzyme catalyses a lipid IIA + a 1,2-diacyl-sn-glycero-3-phosphocholine = a lipid IIB + a 2-acyl-sn-glycero-3-phosphocholine. Transfers a fatty acid residue from the sn-1 position of a phospholipid to the N-linked hydroxyfatty acid chain on the proximal unit of lipid A or its precursors. The polypeptide is Lipid A acyltransferase PagP (Klebsiella pneumoniae subsp. pneumoniae (strain ATCC 700721 / MGH 78578)).